Here is a 67-residue protein sequence, read N- to C-terminus: Myrmicitoxin(1)-Pm6a (67 aa).

The signal sequence occupies residues 1–25 (MRSLYLSFSLTIIFVLVIMHAEAKA). Positions 26 to 37 (ISEPNAIAEADP) are excised as a propeptide. Valine 66 carries the valine amide modification.

Belongs to the formicidae venom clade 3 family. As to expression, expressed by the venom gland.

Its subcellular location is the secreted. Functionally, toxin that causes a rapid and irreversible paralysis when intrathoracically injected into insects (blowflies). Does not cause spontaneous nocifensive behaviors by intraplantar injection in mice. Exhibits hemolytic and cytotoxic activities on HEK293 cells. The chain is Myrmicitoxin(1)-Pm6a from Pogonomyrmex maricopa (Maricopa harvester ant).